We begin with the raw amino-acid sequence, 236 residues long: Sorulation-regulated protein 2 (236 aa).

A signal peptide spans 1–20; sequence MLGLYLSSLFFAFFMAQVFA. N-linked (GlcNAc...) asparagine glycans are attached at residues Asn-155, Asn-160, Asn-203, and Asn-212. Residue Asn-212 is the site of GPI-anchor amidated asparagine attachment. Residues 213-236 constitute a propeptide, removed in mature form; it reads SSSSLMPSMGILSFLFGLYLLLHP.

The GPI-anchor is attached to the protein in the endoplasmic reticulum and serves to target the protein to the cell surface. There, the glucosamine-inositol phospholipid moiety is cleaved off and the GPI-modified mannoprotein is covalently attached via its lipidless GPI glycan remnant to the 1,6-beta-glucan of the outer cell wall layer. In terms of processing, N-glycosylated.

Its subcellular location is the spore wall. It is found in the secreted. The protein resides in the cell wall. It localises to the membrane. This is Sorulation-regulated protein 2 from Saccharomyces cerevisiae (strain ATCC 204508 / S288c) (Baker's yeast).